The chain runs to 442 residues: tRNA-2-methylthio-N(6)-dimethylallyladenosine synthase (442 aa).

In terms of domain architecture, MTTase N-terminal spans 3 to 120 (KKLYIETHGC…LPEMIDAARV (118 aa)). C12, C49, C83, C157, C161, and C164 together coordinate [4Fe-4S] cluster. The Radical SAM core domain maps to 143-375 (RVDGPSAYVS…QHRLNQQGFE (233 aa)). Positions 378 to 442 (RQMVGSIQRI…PHSLRGSLLQ (65 aa)) constitute a TRAM domain.

This sequence belongs to the methylthiotransferase family. MiaB subfamily. Monomer. It depends on [4Fe-4S] cluster as a cofactor.

It localises to the cytoplasm. It catalyses the reaction N(6)-dimethylallyladenosine(37) in tRNA + (sulfur carrier)-SH + AH2 + 2 S-adenosyl-L-methionine = 2-methylsulfanyl-N(6)-dimethylallyladenosine(37) in tRNA + (sulfur carrier)-H + 5'-deoxyadenosine + L-methionine + A + S-adenosyl-L-homocysteine + 2 H(+). Its function is as follows. Catalyzes the methylthiolation of N6-(dimethylallyl)adenosine (i(6)A), leading to the formation of 2-methylthio-N6-(dimethylallyl)adenosine (ms(2)i(6)A) at position 37 in tRNAs that read codons beginning with uridine. The chain is tRNA-2-methylthio-N(6)-dimethylallyladenosine synthase from Pseudomonas syringae pv. syringae (strain B728a).